Consider the following 127-residue polypeptide: MARIAGVDLPRDKRVEIALTYLYGIGLSRSHEILDATGVSPDVRVKDLSDEDALKLRTYIDENYEIEGDLRRWEAMNIKRLGDIGTYRGRRHRQGLPVRGQRTRTNARTRRGRRLTVAGKKKTPAKK.

Positions 90–127 (RRHRQGLPVRGQRTRTNARTRRGRRLTVAGKKKTPAKK) are disordered. Residues 101–127 (QRTRTNARTRRGRRLTVAGKKKTPAKK) are compositionally biased toward basic residues.

The protein belongs to the universal ribosomal protein uS13 family. As to quaternary structure, part of the 30S ribosomal subunit. Forms a loose heterodimer with protein S19. Forms two bridges to the 50S subunit in the 70S ribosome.

Located at the top of the head of the 30S subunit, it contacts several helices of the 16S rRNA. In the 70S ribosome it contacts the 23S rRNA (bridge B1a) and protein L5 of the 50S subunit (bridge B1b), connecting the 2 subunits; these bridges are implicated in subunit movement. Contacts the tRNAs in the A and P-sites. This Synechocystis sp. (strain ATCC 27184 / PCC 6803 / Kazusa) protein is Small ribosomal subunit protein uS13.